The sequence spans 551 residues: Protein ROOT HAIR SPECIFIC 17 (551 aa).

Residues 39 to 59 traverse the membrane as a helical; Signal-anchor for type II membrane protein segment; it reads LFPLVSAVSGCLLLILFSFST. N-linked (GlcNAc...) asparagine glycans are attached at residues Asn109 and Asn153. 293–295 contacts substrate; sequence HLR. N-linked (GlcNAc...) asparagine glycans are attached at residues Asn405 and Asn465. The tract at residues 515–539 is disordered; the sequence is KAKHVNEDDSSEYSEIGNVPISSRS.

It belongs to the glycosyltransferase GT106 family. As to expression, specifically expressed in the root hair.

It is found in the membrane. It functions in the pathway glycan metabolism. This Arabidopsis thaliana (Mouse-ear cress) protein is Protein ROOT HAIR SPECIFIC 17.